Reading from the N-terminus, the 258-residue chain is MVELSEIPGDPNGADPNNNPQEEDEENLPILLQLPEELIERIIAHFPQCYSPSPILVCETFRQVINSDHFYYVTRSLLSFTKPVLYALIAFQAYTRPSWFFLRQSNIALQLHRIRSYEPVQGLWESWGEESELMRFWHSVSSCVVGDLLYALDLTCALEHPIVVYYPNEFVWRPVMGVDTAHLPILCEYRSTLANFDGKLVILGGGDCSESSSEIWCVEIALETRQGDQIWGVVKSVSIVSRDLPMRHVIELCRTVMV.

A disordered region spans residues 1 to 25 (MVELSEIPGDPNGADPNNNPQEEDE). A compositionally biased stretch (low complexity) spans 8 to 20 (PGDPNGADPNNNP). In terms of domain architecture, F-box spans 28–74 (LPILLQLPEELIERIIAHFPQCYSPSPILVCETFRQVINSDHFYYVT).

This Arabidopsis thaliana (Mouse-ear cress) protein is Probable F-box protein At2g29610.